Reading from the N-terminus, the 210-residue chain is Large ribosomal subunit protein uL22 (210 aa).

The tract at residues 123 to 210 is disordered; the sequence is NEMTSKETVK…TKSTKKEGSK (88 aa). A compositionally biased stretch (basic and acidic residues) spans 126-157; it reads TSKETVKEPAKKPSAKVEKPAEAKAPKQETST. The segment covering 158–185 has biased composition (low complexity); the sequence is KKPTTTTESKPKTSKAPAQKQAAKVAKP.

The protein belongs to the universal ribosomal protein uL22 family. Part of the 50S ribosomal subunit.

Functionally, this protein binds specifically to 23S rRNA; its binding is stimulated by other ribosomal proteins, e.g. L4, L17, and L20. It is important during the early stages of 50S assembly. It makes multiple contacts with different domains of the 23S rRNA in the assembled 50S subunit and ribosome. The globular domain of the protein is located near the polypeptide exit tunnel on the outside of the subunit, while an extended beta-hairpin is found that lines the wall of the exit tunnel in the center of the 70S ribosome. This chain is Large ribosomal subunit protein uL22, found in Metamycoplasma arthritidis (strain 158L3-1) (Mycoplasma arthritidis).